A 527-amino-acid polypeptide reads, in one-letter code: Catalase (527 aa).

A compositionally biased stretch (basic and acidic residues) spans 1-22; sequence MADNRDPASDQMKHWKEQRAAQ. The interval 1–32 is disordered; the sequence is MADNRDPASDQMKHWKEQRAAQKPDILTTGSG. Ala2 carries the post-translational modification N-acetylalanine. Residue Ser9 is modified to Phosphoserine. Position 13 is an N6-succinyllysine (Lys13). Active-site residues include His75 and Asn148. 4 residues coordinate NADP(+): His194, Ser201, Arg203, and Asn213. At Lys221 the chain carries N6-succinyllysine. Position 233 is an N6-acetyllysine (Lys233). The NADP(+) site is built by Lys237, Trp303, and His305. Tyr358 contributes to the heme binding site. 2 positions are modified to phosphoserine: Ser417 and Ser434. An N6-acetyllysine; alternate modification is found at Lys480. An N6-succinyllysine; alternate modification is found at Lys480. Position 499 is an N6-acetyllysine (Lys499). A Phosphothreonine modification is found at Thr511. Residue Ser517 is modified to Phosphoserine. The short motif at 524 to 527 is the Microbody targeting signal; atypical element; sequence KANL.

Belongs to the catalase family. Homotetramer. Interacts (via microbody targeting signal) with PEX5, monomeric form interacts with PEX5, leading to its translocation into peroxisomes. Requires heme as cofactor. NADP(+) serves as cofactor.

It is found in the peroxisome matrix. It catalyses the reaction 2 H2O2 = O2 + 2 H2O. Catalyzes the degradation of hydrogen peroxide (H(2)O(2)) generated by peroxisomal oxidases to water and oxygen, thereby protecting cells from the toxic effects of hydrogen peroxide. Promotes growth of cells including T-cells, B-cells, myeloid leukemia cells, melanoma cells, mastocytoma cells and normal and transformed fibroblast cells. The chain is Catalase (CAT) from Sus scrofa (Pig).